A 424-amino-acid polypeptide reads, in one-letter code: Glutamyl-tRNA(Gln) amidotransferase subunit D (424 aa).

The disordered stretch occupies residues Asn58–Ser79. The segment covering Gly66–Lys78 has biased composition (basic and acidic residues). Residues Pro84–Ala406 enclose the Asparaginase/glutaminase domain. Active-site residues include Thr94, Thr170, Asp171, and Lys247.

The protein belongs to the asparaginase 1 family. GatD subfamily. As to quaternary structure, heterodimer of GatD and GatE.

It carries out the reaction L-glutamyl-tRNA(Gln) + L-glutamine + ATP + H2O = L-glutaminyl-tRNA(Gln) + L-glutamate + ADP + phosphate + H(+). Functionally, allows the formation of correctly charged Gln-tRNA(Gln) through the transamidation of misacylated Glu-tRNA(Gln) in organisms which lack glutaminyl-tRNA synthetase. The reaction takes place in the presence of glutamine and ATP through an activated gamma-phospho-Glu-tRNA(Gln). The GatDE system is specific for glutamate and does not act on aspartate. The polypeptide is Glutamyl-tRNA(Gln) amidotransferase subunit D (Methanosarcina barkeri (strain Fusaro / DSM 804)).